We begin with the raw amino-acid sequence, 759 residues long: MKCARLNDRIIHLHTYSREHYQFLFEEGIKGHLFCSHCGKPVLLRLNIADPPEFIHRQPGDFPACEEACEPKPSKEGKKEDDQESGVIRLPKGKAIAADPSPAVTEWHRPRSIKPGTPFVPKTIEPDTSLFPSVGLNTDQLKAVTETEGPLLVLAGAGSGKTRVLTARAAHMIEHLGIPPENMLLVTFTTKAVAEMKERMANQYGLQPAKVRRIVTGTFHSLFYKILYHSNSAKWNGEHLLKMEWQREQYIKKALYEEGIDEKESPVDQALQQIGFWKNTYVPNERIPLKDEWEKQVYRLYEHYERQKKEHSQFDFDDMASACYELFIERPDLLEQYQSRFTYILIDEFQDINPVQYKIMQMLASPEQNLCCVGDDDQSIYAFRGSNPSFILDFQKDYPGAKTIYLTANYRSTHPIVSSADIVVKKNKNRYAKTLEAARDDIQVPVLFYPYDEEEEATMVVSDIKEKIQNGASPEDFAVLYRTNSGGRAIYERLHQSSIPYTADRGVQSFYSRRIVRQILAYLYASQNEDDTEAIKHLLPALFLKQSALNTLKALSITEDCTMIKALAKLPDLKPFQLDKIKKIVPFFASLRTMKPVEAITFAEGKMGFSEYLKKRGNEGNKLEKGSDDLRDIKVVAKKFKTIPDFLAHVDHMRAAEKNRTDEHGVQLMTIHRSKGLEFKTVYVLGTVDGSIPHDFSLETARKGDEAALEEERRLLYVAMTRAKQHLYLSCPANRRGKTANRSRFLYPLLQKARQPLHH.

Residues 68–121 are disordered; sequence ACEPKPSKEGKKEDDQESGVIRLPKGKAIAADPSPAVTEWHRPRSIKPGTPFVP. A compositionally biased stretch (basic and acidic residues) spans 69 to 81; that stretch reads CEPKPSKEGKKED. Residues 134 to 413 form the UvrD-like helicase ATP-binding domain; the sequence is VGLNTDQLKA…IYLTANYRST (280 aa). ATP contacts are provided by residues 158-163 and Arg-411; that span reads GSGKTR. The UvrD-like helicase C-terminal domain occupies 414 to 676; the sequence is HPIVSSADIV…QLMTIHRSKG (263 aa).

This sequence belongs to the helicase family. UvrD subfamily.

It is found in the cytoplasm. The catalysed reaction is Couples ATP hydrolysis with the unwinding of duplex DNA by translocating in the 3'-5' direction.. The enzyme catalyses ATP + H2O = ADP + phosphate + H(+). May be involved in the generation of recombinogenic substrates for the subsequent action of RecA. The sequence is that of Putative ATP-dependent DNA helicase YjcD (yjcD) from Bacillus subtilis (strain 168).